We begin with the raw amino-acid sequence, 251 residues long: Plant UBX domain-containing protein 1 (251 aa).

An N-acetylmethionine modification is found at methionine 1. Positions 104–180 (SKLTKAVIRV…GFVPGAIVYF (77 aa)) constitute a UBX domain. Residues 212 to 251 (AVEPVESSSEPATVDSSAVPVEHERKSTEKKTTKPKWFKM) form a disordered region. The span at 217–227 (ESSSEPATVDS) shows a compositional bias: polar residues. Over residues 232–243 (VEHERKSTEKKT) the composition is skewed to basic and acidic residues.

Interacts with CDC48A (non-hexameric) via its UBX-containing C-terminal domain.

Its subcellular location is the cytoplasm. Functionally, regulates CDC48A by inhibiting its ATPase activity and by promoting the disassembly of the active hexamer. The protein is Plant UBX domain-containing protein 1 of Arabidopsis thaliana (Mouse-ear cress).